A 393-amino-acid polypeptide reads, in one-letter code: MDGSGQQTDTMMSDAGAEQPPPAPQPVAGMDNIPATLSYGGRFIQYNIFGNIFEVTAKYKPPILPIGKGAYGIVCSALNSETIENVAIKKIANAFDNKIDAKRTLREIKLLRHMDHENIVAIRDIIPPPQREAFNDVYIAYELMDTDLHQIIRSNQGLSEEHCQYFLYQILRGLKYIHSANVLHRDLKPSNLLLNANCDLKICDFGLARVTSETDFMTEYVVTRWYRPPELLLNSSDYTAAIDIWSVGCIFTELMDRKPLFPGRDHVHQLRLIMELIGTPSEAEMEFLNENAKRYIRQLPLYRRQSFTEKFPHVHPAAIDLVEKMLTFDPRRRITVEGALAHPYLNSLHDISDEPICMTPFSFDFEQHALTEEQMKELIYRESLAFNPEYQHM.

Over residues 1 to 11 (MDGSGQQTDTM) the composition is skewed to polar residues. Residues 1–31 (MDGSGQQTDTMMSDAGAEQPPPAPQPVAGMD) form a disordered region. A Protein kinase domain is found at 60 to 345 (KPPILPIGKG…VEGALAHPYL (286 aa)). Residues 66–74 (IGKGAYGIV) and Lys89 contribute to the ATP site. The active-site Proton acceptor is the Asp186. Positions 218–220 (TEY) match the TXY motif.

The protein belongs to the protein kinase superfamily. CMGC Ser/Thr protein kinase family. MAP kinase subfamily. In terms of assembly, interacts with SIPKK.

It carries out the reaction L-tyrosyl-[protein] + ATP = O-phospho-L-tyrosyl-[protein] + ADP + H(+). The catalysed reaction is L-seryl-[protein] + ATP = O-phospho-L-seryl-[protein] + ADP + H(+). It catalyses the reaction L-threonyl-[protein] + ATP = O-phospho-L-threonyl-[protein] + ADP + H(+). Activated by threonine and tyrosine phosphorylation. Phosphorylates myelin basic protein (MBP) in vitro. May be involved in disease resistance. The sequence is that of Mitogen-activated protein kinase SIPK from Nicotiana tabacum (Common tobacco).